The sequence spans 313 residues: Acetyl-coenzyme A carboxylase carboxyl transferase subunit beta (313 aa).

The region spanning 24–293 (LWIKCPDSGQ…LETASKSVQP (270 aa)) is the CoA carboxyltransferase N-terminal domain.

It belongs to the AccD/PCCB family. In terms of assembly, acetyl-CoA carboxylase is a heterohexamer composed of biotin carboxyl carrier protein (AccB), biotin carboxylase (AccC) and two subunits each of ACCase subunit alpha (AccA) and ACCase subunit beta (AccD).

The protein resides in the cytoplasm. It carries out the reaction N(6)-carboxybiotinyl-L-lysyl-[protein] + acetyl-CoA = N(6)-biotinyl-L-lysyl-[protein] + malonyl-CoA. Its pathway is lipid metabolism; malonyl-CoA biosynthesis; malonyl-CoA from acetyl-CoA: step 1/1. Functionally, component of the acetyl coenzyme A carboxylase (ACC) complex. Biotin carboxylase (BC) catalyzes the carboxylation of biotin on its carrier protein (BCCP) and then the CO(2) group is transferred by the transcarboxylase to acetyl-CoA to form malonyl-CoA. In Bradyrhizobium diazoefficiens (strain JCM 10833 / BCRC 13528 / IAM 13628 / NBRC 14792 / USDA 110), this protein is Acetyl-coenzyme A carboxylase carboxyl transferase subunit beta.